Here is a 970-residue protein sequence, read N- to C-terminus: mRNA-decapping enzyme subunit 2 (970 aa).

The Nudix hydrolase domain maps to 101-228 (KSIPVRGAAI…IKYYLINSMM (128 aa)). Position 116 is a phosphoserine (S116). Residues 134 to 155 (GKISKDENDIDCCIREVKEEIG) carry the Nudix box motif. Mn(2+) is bound by residues E149 and E153. 3 disordered regions span residues 287-341 (NNAV…ANNK), 417-465 (AVSQ…PKLK), and 499-692 (PTSS…LSST). Positions 300-314 (EHQHLKEQSGEHNQQ) are enriched in basic and acidic residues. Residues 315 to 334 (KDQQSSFSSQQQPSIFPSLS) show a composition bias toward low complexity. Residue S439 is modified to Phosphoserine. Positions 499-522 (PTSSQKTHASKPDTSFLPNDSVSG) are enriched in polar residues. Residues 526–539 (AEYEDFESSSDEEV) show a composition bias toward acidic residues. Residues 560–576 (SEKDSRRSQKEKPRSDA) are compositionally biased toward basic and acidic residues. Residues 577–590 (NKTNLNASAESNSV) show a composition bias toward polar residues. Residues 596–608 (KSSPSTQSKQNSS) show a composition bias toward low complexity. Residues 625–637 (DAYEVFESSSDEE) show a composition bias toward acidic residues. The residue at position 677 (T677) is a Phosphothreonine. Over residues 677–691 (TESNKSINETVGLSS) the composition is skewed to polar residues. 6 positions are modified to phosphoserine: S679, S682, S751, S771, S773, and S778. The tract at residues 831 to 862 (LKKNNSTGYPRTEGGPSSEMPTSMKRNDATNN) is disordered.

Belongs to the Nudix hydrolase family. DCP2 subfamily. In terms of assembly, component of the decapping complex composed of DCP1 and DCP2. Interacts with mRNA, LSM2, LSM4 and LSM8. Mn(2+) serves as cofactor.

Its subcellular location is the cytoplasm. It is found in the P-body. Catalytic component of the decapping complex necessary for the degradation of mRNAs, both in normal mRNA turnover and in nonsense-mediated mRNA decay. Removes the 7-methyl guanine cap structure from mRNA molecules, yielding a 5'-phosphorylated mRNA fragment and 7m-GDP. Decapping is the major pathway of mRNA degradation in yeast. It occurs through deadenylation, decapping and subsequent 5' to 3' exonucleolytic decay of the transcript body. This Saccharomyces cerevisiae (strain YJM789) (Baker's yeast) protein is mRNA-decapping enzyme subunit 2 (DCP2).